Consider the following 907-residue polypeptide: Valine--tRNA ligase (907 aa).

The short motif at 45–55 (PNVTGSLHMGH) is the 'HIGH' region element. The 'KMSKS' region motif lies at 554-558 (KMSKS). Residue lysine 557 coordinates ATP. Residues 838–870 (GQLIDLEAERARLMKDVSKIEQDIEKLSAKLSN) adopt a coiled-coil conformation.

This sequence belongs to the class-I aminoacyl-tRNA synthetase family. ValS type 1 subfamily. As to quaternary structure, monomer.

The protein localises to the cytoplasm. It carries out the reaction tRNA(Val) + L-valine + ATP = L-valyl-tRNA(Val) + AMP + diphosphate. Functionally, catalyzes the attachment of valine to tRNA(Val). As ValRS can inadvertently accommodate and process structurally similar amino acids such as threonine, to avoid such errors, it has a 'posttransfer' editing activity that hydrolyzes mischarged Thr-tRNA(Val) in a tRNA-dependent manner. The sequence is that of Valine--tRNA ligase from Bartonella henselae (strain ATCC 49882 / DSM 28221 / CCUG 30454 / Houston 1) (Rochalimaea henselae).